The sequence spans 57 residues: Small ribosomal subunit protein bS21 (57 aa).

It belongs to the bacterial ribosomal protein bS21 family.

In Bacillus pumilus (strain SAFR-032), this protein is Small ribosomal subunit protein bS21.